The chain runs to 142 residues: PDZ domain-containing protein 11 (142 aa).

In terms of domain architecture, PDZ spans 49–131 (TIVLKKPPGA…ILMKVRYFPY (83 aa)).

It localises to the cytoplasm. This chain is PDZ domain-containing protein 11 (pdzd11), found in Danio rerio (Zebrafish).